The sequence spans 132 residues: Pro-MCH 1 (132 aa).

The signal sequence occupies residues 1–24; the sequence is MRHYVLSISFAVALFLECYTPSTA. Residues cysteine 120 and cysteine 129 are joined by a disulfide bond.

This sequence belongs to the melanin-concentrating hormone family. Pituitary gland. Produced in neurons of lateral basal hypothalamus which project both to the brain and to the neural lobe of the pituitary gland from where MCH is released.

Plays a role in skin pigmentation by antagonizing the action of melanotropin alpha. Induces melanin concentration within the melanophores. May participate in the control of the hypothalamo-pituitary adrenal gland axis by inhibiting the release of ACTH. This is Pro-MCH 1 (mch1) from Oncorhynchus keta (Chum salmon).